The sequence spans 226 residues: Cytidylate kinase (226 aa).

Residue 10–18 (GPAGAGKST) participates in ATP binding.

This sequence belongs to the cytidylate kinase family. Type 1 subfamily.

Its subcellular location is the cytoplasm. It carries out the reaction CMP + ATP = CDP + ADP. The enzyme catalyses dCMP + ATP = dCDP + ADP. This Caldicellulosiruptor saccharolyticus (strain ATCC 43494 / DSM 8903 / Tp8T 6331) protein is Cytidylate kinase.